The sequence spans 208 residues: Uracil phosphoribosyltransferase (208 aa).

5-phospho-alpha-D-ribose 1-diphosphate is bound by residues R78, R103, and 130–138 (DPMLATGGS). Uracil is bound by residues I193 and 198-200 (GDA). Residue D199 coordinates 5-phospho-alpha-D-ribose 1-diphosphate.

It belongs to the UPRTase family. Mg(2+) serves as cofactor.

It catalyses the reaction UMP + diphosphate = 5-phospho-alpha-D-ribose 1-diphosphate + uracil. Its pathway is pyrimidine metabolism; UMP biosynthesis via salvage pathway; UMP from uracil: step 1/1. Allosterically activated by GTP. In terms of biological role, catalyzes the conversion of uracil and 5-phospho-alpha-D-ribose 1-diphosphate (PRPP) to UMP and diphosphate. The chain is Uracil phosphoribosyltransferase from Aeromonas salmonicida (strain A449).